The primary structure comprises 479 residues: Glutamyl-tRNA(Gln) amidotransferase subunit A (479 aa).

Catalysis depends on charge relay system residues Lys-74 and Ser-149. Ser-173 acts as the Acyl-ester intermediate in catalysis.

It belongs to the amidase family. GatA subfamily. As to quaternary structure, heterotrimer of A, B and C subunits.

It carries out the reaction L-glutamyl-tRNA(Gln) + L-glutamine + ATP + H2O = L-glutaminyl-tRNA(Gln) + L-glutamate + ADP + phosphate + H(+). Functionally, allows the formation of correctly charged Gln-tRNA(Gln) through the transamidation of misacylated Glu-tRNA(Gln) in organisms which lack glutaminyl-tRNA synthetase. The reaction takes place in the presence of glutamine and ATP through an activated gamma-phospho-Glu-tRNA(Gln). The protein is Glutamyl-tRNA(Gln) amidotransferase subunit A of Cenarchaeum symbiosum (strain A).